A 63-amino-acid chain; its full sequence is Large ribosomal subunit protein uL29 (63 aa).

This sequence belongs to the universal ribosomal protein uL29 family.

The polypeptide is Large ribosomal subunit protein uL29 (Shewanella denitrificans (strain OS217 / ATCC BAA-1090 / DSM 15013)).